The chain runs to 462 residues: MSAILTDRQAEELHKAIIAYLGVINAPKTAAAFREEVNFSAAFDDATRKKYEGLLEKKWTSVVRLQKKVLELEQRNQSLQSELDSTTPTSLLRRNQDPSSWLPRAPARHTLQSHRSPITCVAFHPVFSSLASGSEDTTIKIWDWELGELERTVKGHTKGVLDVDFGGPRGGTLLASCSSDLTIKLWDPSDEYKNIRTLPGHDHSVSAIRFVPSGAAGSPSSGNLLVSASRDKTLRVWDVTTGYCVKTIRGHADWVRDVSPSFDGRWLLSAGNDQTARLWDASSGEAKCTFLGHEHVIECVTIAPPVSYANLASLAGLKKPPPLSSSAEFVATGSRDKTIKIWDGRGTLIKTLAGHDNWVRALIFHPGGKYLLSASDDKTIRCWDLTQEGRCVKVVTDAHSHFVSCMRWAPNVVKDAPTNGDAPNGTTANGASKKKDEESAKAGIRCVIATGCVDLNVRIFAS.

Residues 9–41 enclose the LisH domain; that stretch reads QAEELHKAIIAYLGVINAPKTAAAFREEVNFSA. Residues 60–87 are a coiled coil; that stretch reads TSVVRLQKKVLELEQRNQSLQSELDSTT. Positions 78–99 are enriched in polar residues; sequence SLQSELDSTTPTSLLRRNQDPS. The tract at residues 78–103 is disordered; sequence SLQSELDSTTPTSLLRRNQDPSSWLP. WD repeat units lie at residues 113 to 154, 156 to 196, 200 to 247, 250 to 289, 292 to 352, 354 to 393, 398 to 445, and 447 to 462; these read SHRS…RTVK, HTKG…KNIR, GHDH…CVKT, GHAD…AKCT, GHEH…IKTL, GHDN…RCVK, AHSH…AGIR, and VIAT…IFAS. A disordered region spans residues 414–434; sequence KDAPTNGDAPNGTTANGASKK.

Belongs to the WD repeat LIS1/nudF family. In terms of assembly, self-associates. Interacts with NDL1 and dynein.

It is found in the cytoplasm. The protein localises to the cytoskeleton. Its subcellular location is the spindle pole. Its function is as follows. Positively regulates the activity of the minus-end directed microtubule motor protein dynein. May enhance dynein-mediated microtubule sliding by targeting dynein to the microtubule plus end. Required for nuclear migration during vegetative growth as well as development. Required for retrograde early endosome (EE) transport from the hyphal tip. Required for localization of dynein to the mitotic spindle poles. Recruits additional proteins to the dynein complex at SPBs. The sequence is that of Nuclear distribution protein PAC1 from Phaeosphaeria nodorum (strain SN15 / ATCC MYA-4574 / FGSC 10173) (Glume blotch fungus).